The following is a 209-amino-acid chain: Thiamine-phosphate synthase (209 aa).

4-amino-2-methyl-5-(diphosphooxymethyl)pyrimidine is bound by residues 38 to 42 and asparagine 70; that span reads QLREK. Residues aspartate 71 and aspartate 90 each coordinate Mg(2+). Serine 109 is a 4-amino-2-methyl-5-(diphosphooxymethyl)pyrimidine binding site. 135-137 is a binding site for 2-[(2R,5Z)-2-carboxy-4-methylthiazol-5(2H)-ylidene]ethyl phosphate; it reads TPT. Residue lysine 138 coordinates 4-amino-2-methyl-5-(diphosphooxymethyl)pyrimidine. Residues glycine 166 and 186–187 each bind 2-[(2R,5Z)-2-carboxy-4-methylthiazol-5(2H)-ylidene]ethyl phosphate; that span reads IS.

Belongs to the thiamine-phosphate synthase family. Requires Mg(2+) as cofactor.

The catalysed reaction is 2-[(2R,5Z)-2-carboxy-4-methylthiazol-5(2H)-ylidene]ethyl phosphate + 4-amino-2-methyl-5-(diphosphooxymethyl)pyrimidine + 2 H(+) = thiamine phosphate + CO2 + diphosphate. It catalyses the reaction 2-(2-carboxy-4-methylthiazol-5-yl)ethyl phosphate + 4-amino-2-methyl-5-(diphosphooxymethyl)pyrimidine + 2 H(+) = thiamine phosphate + CO2 + diphosphate. The enzyme catalyses 4-methyl-5-(2-phosphooxyethyl)-thiazole + 4-amino-2-methyl-5-(diphosphooxymethyl)pyrimidine + H(+) = thiamine phosphate + diphosphate. Its pathway is cofactor biosynthesis; thiamine diphosphate biosynthesis; thiamine phosphate from 4-amino-2-methyl-5-diphosphomethylpyrimidine and 4-methyl-5-(2-phosphoethyl)-thiazole: step 1/1. Condenses 4-methyl-5-(beta-hydroxyethyl)thiazole monophosphate (THZ-P) and 2-methyl-4-amino-5-hydroxymethyl pyrimidine pyrophosphate (HMP-PP) to form thiamine monophosphate (TMP). This Syntrophomonas wolfei subsp. wolfei (strain DSM 2245B / Goettingen) protein is Thiamine-phosphate synthase.